The following is a 121-amino-acid chain: Large ribosomal subunit protein uL14 (121 aa).

It belongs to the universal ribosomal protein uL14 family. As to quaternary structure, part of the 50S ribosomal subunit. Forms a cluster with proteins L3 and L19. In the 70S ribosome, L14 and L19 interact and together make contacts with the 16S rRNA in bridges B5 and B8.

Its function is as follows. Binds to 23S rRNA. Forms part of two intersubunit bridges in the 70S ribosome. This is Large ribosomal subunit protein uL14 from Legionella pneumophila (strain Paris).